Reading from the N-terminus, the 134-residue chain is Large ribosomal subunit protein uL16c (134 aa).

The protein belongs to the universal ribosomal protein uL16 family. Part of the 50S ribosomal subunit.

The protein resides in the plastid. The protein localises to the chloroplast. The polypeptide is Large ribosomal subunit protein uL16c (Pinus koraiensis (Korean pine)).